The primary structure comprises 1357 residues: Ubiquitin carboxyl-terminal hydrolase 19 (1357 aa).

Disordered stretches follow at residues Met-1–Asp-52, Leu-162–Ala-239, and Val-275–Asp-296. Over Met-1–Tyr-1330 the chain is Cytoplasmic. Composition is skewed to basic and acidic residues over residues Asp-28–Asp-52 and Ser-171–Asn-182. The CS 1 domain occupies Lys-51–Leu-140. Positions Ser-194–Ala-206 are enriched in low complexity. 2 positions are modified to phosphoserine: Ser-221 and Ser-283. In terms of domain architecture, CS 2 spans Leu-321–Glu-423. Residues Ala-432–Asp-479 are disordered. Residues Pro-437 to Gly-457 are compositionally biased toward low complexity. Over residues Glu-459–Asp-475 the composition is skewed to basic and acidic residues. The region spanning Thr-536–Arg-1253 is the USP domain. Cys-545 acts as the Nucleophile in catalysis. Residues Cys-830, Cys-833, Cys-847, Cys-850, Cys-856, Cys-860, His-868, and Cys-872 each coordinate Zn(2+). Residues Cys-830 to Cys-872 form an MYND-type zinc finger. Residues Asp-962–Ser-981 are disordered. His-1204 serves as the catalytic Proton acceptor. Basic and acidic residues predominate over residues Arg-1259 to Asp-1271. 2 disordered regions span residues Arg-1259–Ala-1278 and Ala-1292–Pro-1320. Residues Phe-1331 to Val-1351 form a helical membrane-spanning segment. The Lumenal segment spans residues Ser-1352–Arg-1357.

As to quaternary structure, interacts with RNF123. Interacts with BIRC2/c-IAP1, BIRC3/c-IAP2 and XIAP/BIRC4. Interacts with HIF1A (via N-terminus). As to expression, expressed in testis, heart, kidney and skeletal muscle. Low levels of expression are detectable in all other tissues screened.

The protein resides in the endoplasmic reticulum membrane. The catalysed reaction is Thiol-dependent hydrolysis of ester, thioester, amide, peptide and isopeptide bonds formed by the C-terminal Gly of ubiquitin (a 76-residue protein attached to proteins as an intracellular targeting signal).. Functionally, deubiquitinating enzyme that regulates the degradation of various proteins by removing ubiquitin moieties, thereby preventing their proteasomal degradation. Stabilizes RNF123, which promotes CDKN1B degradation and contributes to cell proliferation. Decreases the levels of ubiquitinated proteins during skeletal muscle formation and acts to repress myogenesis. Modulates transcription of major myofibrillar proteins. Also involved in turnover of endoplasmic-reticulum-associated degradation (ERAD) substrates. Mechanistically, deubiquitinates and thereby stabilizes several E3 ligases involved in the ERAD pathway including SYVN1 or MARCHF6. Regulates the stability of other E3 ligases including BIRC2/c-IAP1 and BIRC3/c-IAP2 by preventing their ubiquitination. Required for cells to mount an appropriate response to hypoxia by rescuing HIF1A from degradation in a non-catalytic manner and by mediating the deubiquitination of FUNDC1. Attenuates mitochondrial damage and ferroptosis by targeting and stabilizing NADPH oxidase 4/NOX4. Negatively regulates TNF-alpha- and IL-1beta-triggered NF-kappa-B activation by hydrolyzing 'Lys-27'- and 'Lys-63'-linked polyubiquitin chains from MAP3K7. Modulates also the protein level and aggregation of polyQ-expanded huntingtin/HTT through HSP90AA1. In Rattus norvegicus (Rat), this protein is Ubiquitin carboxyl-terminal hydrolase 19 (Usp19).